We begin with the raw amino-acid sequence, 214 residues long: Glycerol-3-phosphate acyltransferase (214 aa).

5 consecutive transmembrane segments (helical) span residues 4 to 24, 52 to 72, 82 to 102, 118 to 138, and 159 to 179; these read LIVAVVAYLIGSVSFAVIVSA, AAILTLIGDAFKGWLPVWFVV, ETSVAIASVAVFLGHLYPVFF, LAINPILGVATLLTWLIVAFF, and FLFGPHVIALAIVVMSSLLVW.

The protein belongs to the PlsY family. Probably interacts with PlsX.

The protein localises to the cell inner membrane. It carries out the reaction an acyl phosphate + sn-glycerol 3-phosphate = a 1-acyl-sn-glycero-3-phosphate + phosphate. The protein operates within lipid metabolism; phospholipid metabolism. Functionally, catalyzes the transfer of an acyl group from acyl-phosphate (acyl-PO(4)) to glycerol-3-phosphate (G3P) to form lysophosphatidic acid (LPA). This enzyme utilizes acyl-phosphate as fatty acyl donor, but not acyl-CoA or acyl-ACP. This Paraburkholderia phytofirmans (strain DSM 17436 / LMG 22146 / PsJN) (Burkholderia phytofirmans) protein is Glycerol-3-phosphate acyltransferase.